Consider the following 528-residue polypeptide: Phosphoenolpyruvate carboxykinase (ATP) (528 aa).

Substrate is bound by residues Arg56, Tyr192, and Lys198. Residues Lys198, His217, and Gly233–Thr241 each bind ATP. Mn(2+) contacts are provided by Lys198 and His217. Mn(2+) is bound at residue Asp254. ATP contacts are provided by Glu282, Arg319, and Thr444. Arg319 lines the substrate pocket.

Belongs to the phosphoenolpyruvate carboxykinase (ATP) family. Mn(2+) serves as cofactor.

It is found in the cytoplasm. It carries out the reaction oxaloacetate + ATP = phosphoenolpyruvate + ADP + CO2. It functions in the pathway carbohydrate biosynthesis; gluconeogenesis. Involved in the gluconeogenesis. Catalyzes the conversion of oxaloacetate (OAA) to phosphoenolpyruvate (PEP) through direct phosphoryl transfer between the nucleoside triphosphate and OAA. The sequence is that of Phosphoenolpyruvate carboxykinase (ATP) from Bacillus pumilus (strain SAFR-032).